The chain runs to 240 residues: 14-3-3 protein 3 (240 aa).

Belongs to the 14-3-3 family. In terms of assembly, interacts with coactosin. Interacts with ACTO/actophorin.

It is found in the cytoplasm. The protein localises to the cell projection. The protein resides in the phagocytic cup. In terms of biological role, adapter protein which is required for phagocytosis and motility, probably by regulating actin cytoskeleton dynamics. During phagocytosis, plays a role in the initiation and/or formation of the phagocytic cup and is involved in the recruitment of the actin binding protein coactosin to the phagocytic cup. In Entamoeba histolytica (strain ATCC 30459 / HM-1:IMSS / ABRM), this protein is 14-3-3 protein 3.